We begin with the raw amino-acid sequence, 154 residues long: Ribonuclease H (154 aa).

Positions methionine 1–glycine 142 constitute an RNase H type-1 domain. The Mg(2+) site is built by aspartate 10, glutamate 48, aspartate 70, and aspartate 134.

Belongs to the RNase H family. Monomer. Requires Mg(2+) as cofactor.

The protein localises to the cytoplasm. The catalysed reaction is Endonucleolytic cleavage to 5'-phosphomonoester.. Functionally, endonuclease that specifically degrades the RNA of RNA-DNA hybrids. The chain is Ribonuclease H from Edwardsiella ictaluri (strain 93-146).